The primary structure comprises 202 residues: MKALTTRQQEVFDLIRDHISQTGMPPTRAEIAQRLGFRSPNAAEEHLKALARKGAIEIVSGASRGIRLLTEEEHGLPLIGRVAAGEPLLAQQHIEGHYQVDPSMFKPNADFLLRVSGMSMKDIGILDGDLLAVHKTQDVRNGQVVVARIDDEVTVKRLKKQGNVVELLPENSEFTPIVVDLRQQSFTIEGLAVGVIRNGEWL.

The H-T-H motif DNA-binding region spans 28–48; it reads RAEIAQRLGFRSPNAAEEHLK. Catalysis depends on for autocatalytic cleavage activity residues S119 and K156.

Belongs to the peptidase S24 family. As to quaternary structure, homodimer.

The catalysed reaction is Hydrolysis of Ala-|-Gly bond in repressor LexA.. In terms of biological role, represses a number of genes involved in the response to DNA damage (SOS response), including recA and lexA. Binds to the 16 bp palindromic sequence 5'-CTGTATATATATACAG-3'. In the presence of single-stranded DNA, RecA interacts with LexA causing an autocatalytic cleavage which disrupts the DNA-binding part of LexA, leading to derepression of the SOS regulon and eventually DNA repair. The chain is LexA repressor from Klebsiella pneumoniae (strain 342).